A 240-amino-acid chain; its full sequence is Mediator of RNA polymerase II transcription subunit 19-B (240 aa).

Positions 1-14 (MTEIFSSLYGQPDS) are enriched in polar residues. 2 disordered regions span residues 1 to 29 (MTEIFSSLYGQPDSQGPAGPSALGFGSGK) and 168 to 240 (PKKK…SSLR). Basic residues-rich tracts occupy residues 168–180 (PKKKNKHKHKHHR) and 209–221 (KKKKKDKKKKKNR).

It belongs to the Mediator complex subunit 19 family. Component of the Mediator complex.

The protein resides in the nucleus. Its function is as follows. Component of the Mediator complex, a coactivator involved in the regulated transcription of nearly all RNA polymerase II-dependent genes. Mediator functions as a bridge to convey information from gene-specific regulatory proteins to the basal RNA polymerase II transcription machinery. Mediator is recruited to promoters by direct interactions with regulatory proteins and serves as a scaffold for the assembly of a functional preinitiation complex with RNA polymerase II and the general transcription factors. This is Mediator of RNA polymerase II transcription subunit 19-B (med19b) from Danio rerio (Zebrafish).